The primary structure comprises 169 residues: uncharacterized protein (169 aa).

Low complexity predominate over residues 144–157 (AEAHSASPASSDSS). The tract at residues 144–169 (AEAHSASPASSDSSPLTNNIRPISIM) is disordered. Polar residues predominate over residues 158–169 (PLTNNIRPISIM).

This is an uncharacterized protein from Saccharomyces cerevisiae (strain ATCC 204508 / S288c) (Baker's yeast).